A 253-amino-acid chain; its full sequence is 5-oxoprolinase subunit A (253 aa).

Belongs to the LamB/PxpA family. Forms a complex composed of PxpA, PxpB and PxpC.

The catalysed reaction is 5-oxo-L-proline + ATP + 2 H2O = L-glutamate + ADP + phosphate + H(+). Functionally, catalyzes the cleavage of 5-oxoproline to form L-glutamate coupled to the hydrolysis of ATP to ADP and inorganic phosphate. The chain is 5-oxoprolinase subunit A from Bacillus cereus (strain AH820).